We begin with the raw amino-acid sequence, 206 residues long: Orotate phosphoribosyltransferase (206 aa).

Residues K26, 72–73 (YK), R99, K100, K103, H105, and 124–132 (DDVMTSGFS) contribute to the 5-phospho-alpha-D-ribose 1-diphosphate site. Orotate is bound by residues T128 and R157.

The protein belongs to the purine/pyrimidine phosphoribosyltransferase family. PyrE subfamily. As to quaternary structure, homodimer. The cofactor is Mg(2+).

It carries out the reaction orotidine 5'-phosphate + diphosphate = orotate + 5-phospho-alpha-D-ribose 1-diphosphate. It functions in the pathway pyrimidine metabolism; UMP biosynthesis via de novo pathway; UMP from orotate: step 1/2. Catalyzes the transfer of a ribosyl phosphate group from 5-phosphoribose 1-diphosphate to orotate, leading to the formation of orotidine monophosphate (OMP). The sequence is that of Orotate phosphoribosyltransferase from Buchnera aphidicola subsp. Baizongia pistaciae (strain Bp).